The chain runs to 129 residues: UPF0148 protein AF_2370 (129 aa).

The tract at residues 61–80 (SAAKAESEEKPPESTKPAVK) is disordered.

The protein belongs to the UPF0148 family.

The sequence is that of UPF0148 protein AF_2370 from Archaeoglobus fulgidus (strain ATCC 49558 / DSM 4304 / JCM 9628 / NBRC 100126 / VC-16).